Consider the following 455-residue polypeptide: T-box protein VegT-B (455 aa).

Positions 57–230 (LWTQFHQEGT…HNPFAKGFRE (174 aa)) form a DNA-binding region, T-box. Residues 229–241 (REQERSHKRDDVL) are compositionally biased toward basic and acidic residues. Disordered regions lie at residues 229–276 (REQE…RIKE) and 295–350 (ANQG…RRLT). A compositionally biased stretch (polar residues) spans 308 to 326 (GVNQEQQVPTSSSNFYIKS).

As to quaternary structure, forms a repression complex on the promoters of the nodal/nr1 and siamois genes with the maternal factors tcf7l1/tcf3 and pouf5.1/oct-25. Interacts (via C-terminus) with tcf7l1/tcf3 (via N-terminus). Also interacts with the other POU-domain transcription factors pou5f1.2/oct-91 and pou5f1.3/oct-60. As to expression, maternally localized to the vegetal hemisphere of oocytes. Zygotic expression parallels blastopore formation and shifts from dorsal expression in the marginal zone of late blastula and early gastrula stages to a ventral/lateral expression at later stages. During neurula and tailbud stages, expressed in the posterior and anterior ends of the embryo. During tailbud stages, expressed in a subset of interneurons in the neural tube.

The protein resides in the nucleus. Functionally, transcription factor required for both mesoderm and endoderm formation in the embryo; signaling determinants and concentration levels may determine which germ layer is formed. Acts together with beta-catenin to activate genes that are responsible for mesoderm induction including wnt-8, eomes t/bra, siamois, mix1 and sox17. Directly binds to promoter DNA. Patterns the mesoderm along the dorsoventral and posterior axis. Activates siamois gene transcription when alone or in combination with beta-catenin, but inhibits siamois transcription in combination with pou5f1.1/oct-25. The protein is T-box protein VegT-B (vegt-b) of Xenopus laevis (African clawed frog).